The chain runs to 314 residues: MANSHFKHTSVLLDEAVNGLNIRENGIYIDGTFGRGGHSRLILSQLGTEGRLIAIDRDPQAIEVAKAITDPRFSIVHGPFSKLAHYTEKAGLIGKIDGVLLDLGVSSPQLDDPERGFSFMRDGPLDMRMDPTRGQSAAEWLMNATADDIAWVLKTFGEERFAKRIARAIVACNQEEPITRTKALADLIAQASPIKEKHKHPATKSFQAIRIYINSELEEIEQALEGALQVLAPQGRLSVISFHSLEDRIVKRFIRQNSRGPQVPAGLPLTEEQLKARGGRSLKSIGKMKPSEEEVADNPRARSSVLRFAEKVSE.

Residues 36–38 (GGH), Asp-56, Phe-80, Asp-102, and Gln-109 each bind S-adenosyl-L-methionine. The tract at residues 278-300 (GGRSLKSIGKMKPSEEEVADNPR) is disordered. The span at 289 to 300 (KPSEEEVADNPR) shows a compositional bias: basic and acidic residues.

Belongs to the methyltransferase superfamily. RsmH family.

It is found in the cytoplasm. The enzyme catalyses cytidine(1402) in 16S rRNA + S-adenosyl-L-methionine = N(4)-methylcytidine(1402) in 16S rRNA + S-adenosyl-L-homocysteine + H(+). Functionally, specifically methylates the N4 position of cytidine in position 1402 (C1402) of 16S rRNA. The polypeptide is Ribosomal RNA small subunit methyltransferase H (Photorhabdus laumondii subsp. laumondii (strain DSM 15139 / CIP 105565 / TT01) (Photorhabdus luminescens subsp. laumondii)).